Reading from the N-terminus, the 303-residue chain is Diacylglycerol kinase (303 aa).

Residues 1–132 (MKRARIIYNP…IDIGQVNGQY (132 aa)) form the DAGKc domain. ATP is bound by residues 9–13 (NPTSG), T40, 66–72 (GDGTINE), and T93. Residues S213, D216, and M218 each contribute to the Mg(2+) site. The Proton acceptor role is filled by E273.

The protein belongs to the diacylglycerol/lipid kinase family. The cofactor is Mg(2+).

It carries out the reaction a 1,2-diacyl-sn-glycerol + ATP = a 1,2-diacyl-sn-glycero-3-phosphate + ADP + H(+). The catalysed reaction is 1,2-di-(9Z-octadecenoyl)-sn-glycerol + ATP = 1,2-di-(9Z-octadecenoyl)-sn-glycero-3-phosphate + ADP + H(+). Functionally, catalyzes the phosphorylation of diacylglycerol (DAG) into phosphatidic acid. Is a key enzyme involved in the production of lipoteichoic acid by reintroducing DAG formed from the breakdown of membrane phospholipids into the phosphatidylglycerol biosynthetic pathway. Is more active toward long-chain DAG compared with short-chain DAG. Is not able to phosphorylate substrates other than DAG, such as monoacylglycerol, ceramide, undecaprenol, phosphatidylinositol, or sphingosine. The protein is Diacylglycerol kinase (dagK) of Bacillus subtilis (strain 168).